The following is a 598-amino-acid chain: Beta-hexosaminidase A (598 aa).

The first 11 residues, 1–11, serve as a signal peptide directing secretion; that stretch reads MSFITSAHATA. The active site involves aspartate 305.

It belongs to the glycosyl hydrolase 3 family.

The catalysed reaction is Hydrolysis of terminal non-reducing N-acetyl-D-hexosamine residues in N-acetyl-beta-D-hexosaminides.. Its function is as follows. Most active towards p-nitrophenyl-N-acetyl-beta-D-glucosaminide(PNP-beta-GlcNAc) and diacetylchitobiose. This is Beta-hexosaminidase A (cht60) from Pseudoalteromonas piscicida.